The sequence spans 57 residues: Potassium channel toxin alpha-KTx 26.1 (57 aa).

The first 22 residues, 1-22 (MSRLFVFILIALFLSAIIDVMS), serve as a signal peptide directing secretion. 3 disulfides stabilise this stretch: cysteine 30-cysteine 48, cysteine 34-cysteine 53, and cysteine 38-cysteine 55.

This sequence belongs to the short scorpion toxin superfamily. Potassium channel inhibitor family. Alpha-KTx 26 subfamily. Expressed by the venom gland.

The protein localises to the secreted. In terms of biological role, recombinant toxin that reversibly inhibits the potassium current of mKv1.3/KCNA3 channel stably expressed in COS7 cells (IC(50)=150 nM). Also shows a weak inhibition on Kv1.2/KCNA2, Kv1.3/KCNA3 and TRPV1 channels. This is Potassium channel toxin alpha-KTx 26.1 from Olivierus martensii (Manchurian scorpion).